We begin with the raw amino-acid sequence, 57 residues long: Large ribosomal subunit protein bL33 (57 aa).

This sequence belongs to the bacterial ribosomal protein bL33 family.

The polypeptide is Large ribosomal subunit protein bL33 (Shewanella denitrificans (strain OS217 / ATCC BAA-1090 / DSM 15013)).